The chain runs to 358 residues: WD repeat-containing protein 53 (358 aa).

WD repeat units follow at residues 8 to 46 (GHSSPILCLNASQEGLVASGAEGGDLVVWGEDGTLLGHT), 92 to 131 (VNEEEINCLSLNETENLLASADDSGTIKILDLENKKISRS), 134 to 174 (RHSN…PLWI), 195 to 234 (LNPALAHSVSVASCGNVFSCGAEDGKVRIFRVMGVKCEQE), and 239 to 278 (GHSLGVSQVCFLRESYLLLTGGNDGKIKLWDVSSEIEKKH). The span at 278–294 (HKSPTKHTHRKKTKRAA) shows a compositional bias: basic residues. Positions 278-309 (HKSPTKHTHRKKTKRAAYTKQGGGTHASVTGE) are disordered.

Belongs to the WD repeat WDR53 family.

This chain is WD repeat-containing protein 53 (WDR53), found in Bos taurus (Bovine).